Here is an 82-residue protein sequence, read N- to C-terminus: UPF0410 protein YeaQ (82 aa).

The next 2 membrane-spanning stretches (helical) occupy residues 26–46 and 57–77; these read GGGF…GGWI and GFNF…LFIY.

The protein belongs to the UPF0410 family.

Its subcellular location is the cell inner membrane. This Escherichia coli O157:H7 protein is UPF0410 protein YeaQ (yeaQ).